We begin with the raw amino-acid sequence, 455 residues long: Venom prothrombin activator notecarin-D1 (455 aa).

An N-terminal signal peptide occupies residues 1–20; the sequence is MAPQLLLCLILTFLWSLPEA. Positions 21 to 40 are excised as a propeptide; that stretch reads ESNVFLKSKVANRFLQRTKR. The Gla domain maps to 41–86; it reads SNSLFEEIRPGNIERECIEEKCSKEEAREVFEDNEKTETFWNVYVD. A 4-carboxyglutamate mark is found at E46, E47, E54, E56, E59, E60, E65, E66, E69, E72, and E75. C57 and C62 are joined by a disulfide. One can recognise an EGF-like 1; calcium-binding domain in the interval 86-122; sequence DGDQCSSNPCHYRGTCKDGIGSYTCTCLPNYEGKNCE. Cystine bridges form between C90–C101, C95–C110, C112–C121, C129–C140, C136–C149, C151–C164, C172–C328, C216–C221, C236–C252, C376–C390, and C401–C429. Residue S92 is glycosylated (O-linked (Hex...) serine). The EGF-like 2 domain maps to 129-164; it reads CRVDNGNCWHFCKRVQSETQCSCAESYRLGVDGHSC. The propeptide at 182–209 is activation peptide; the sequence is REASLPDFVQSQKATLLKKSDNPSPDIR. Residues 210–453 enclose the Peptidase S1 domain; that stretch reads IVNGMDCKLG…FIPWIKKIMS (244 aa). The active-site Charge relay system is H251. Residue N254 is glycosylated (N-linked (GlcNAc...) asparagine). D308 acts as the Charge relay system in catalysis. Residue S405 is the Charge relay system of the active site.

The protein belongs to the peptidase S1 family. Snake venom subfamily. In terms of assembly, heterodimer of a light chain and a heavy chain; disulfide-linked. Post-translationally, gamma-carboxyglutamate residues are formed by vitamin K dependent carboxylation. These residues are essential for the binding of calcium. Expressed by the venom gland.

It localises to the secreted. It carries out the reaction Selective cleavage of Arg-|-Thr and then Arg-|-Ile bonds in prothrombin to form thrombin.. Its function is as follows. Snake prothrombin activator that attacks the hemostatic system of prey. This protein is functionally similar to blood coagulation factor Xa. The protein is Venom prothrombin activator notecarin-D1 of Notechis scutatus scutatus (Mainland tiger snake).